The following is a 215-amino-acid chain: Late embryogenesis abundant protein 14 (215 aa).

Disordered stretches follow at residues 1–129 and 190–215; these read MASQ…GQTG and SGDN…SDYQ. Basic and acidic residues-rich tracts occupy residues 13-24, 32-41, 54-81, and 88-111; these read GETKARAEEKTG, EKAREAKDTA, GAKE…KDAA, and AMDK…DRAA. Polar residues predominate over residues 192–215; the sequence is DNKNNAAAGKDTSTYKPGTGSDYQ.

The protein belongs to the LEA type 4 family. Expressed in the shoot apex and leaves. Expressed in dry seeds. Expressed in roots and leaves.

Its subcellular location is the nucleus. The polypeptide is Late embryogenesis abundant protein 14 (Oryza sativa subsp. japonica (Rice)).